The primary structure comprises 127 residues: MPRLMGVDIPNDKQIQYSLTYLYGLGLYRAREVCEKLGIDPTSPASDISDEDVGRIAALLERDYLVEGPLRRQVTQNISRMREIKSYRGIRHRVSLPVRGQRTKTNARTRKGPRKTVAGKKGVKDLR.

The segment at 97 to 127 is disordered; that stretch reads PVRGQRTKTNARTRKGPRKTVAGKKGVKDLR. A compositionally biased stretch (basic residues) spans 101–118; the sequence is QRTKTNARTRKGPRKTVA.

The protein belongs to the universal ribosomal protein uS13 family. In terms of assembly, part of the 30S ribosomal subunit. Forms a loose heterodimer with protein S19. Forms two bridges to the 50S subunit in the 70S ribosome.

Its function is as follows. Located at the top of the head of the 30S subunit, it contacts several helices of the 16S rRNA. In the 70S ribosome it contacts the 23S rRNA (bridge B1a) and protein L5 of the 50S subunit (bridge B1b), connecting the 2 subunits; these bridges are implicated in subunit movement. Contacts the tRNAs in the A and P-sites. The polypeptide is Small ribosomal subunit protein uS13 (Rhodopirellula baltica (strain DSM 10527 / NCIMB 13988 / SH1)).